Here is a 569-residue protein sequence, read N- to C-terminus: Proline--tRNA ligase (569 aa).

Belongs to the class-II aminoacyl-tRNA synthetase family. ProS type 1 subfamily. In terms of assembly, homodimer.

The protein resides in the cytoplasm. The enzyme catalyses tRNA(Pro) + L-proline + ATP = L-prolyl-tRNA(Pro) + AMP + diphosphate. Its function is as follows. Catalyzes the attachment of proline to tRNA(Pro) in a two-step reaction: proline is first activated by ATP to form Pro-AMP and then transferred to the acceptor end of tRNA(Pro). As ProRS can inadvertently accommodate and process non-cognate amino acids such as alanine and cysteine, to avoid such errors it has two additional distinct editing activities against alanine. One activity is designated as 'pretransfer' editing and involves the tRNA(Pro)-independent hydrolysis of activated Ala-AMP. The other activity is designated 'posttransfer' editing and involves deacylation of mischarged Ala-tRNA(Pro). The misacylated Cys-tRNA(Pro) is not edited by ProRS. This is Proline--tRNA ligase from Legionella pneumophila (strain Lens).